The primary structure comprises 497 residues: Probable zinc metalloprotease TRV_03476 (497 aa).

Residues 1-24 (MRFLISSLLSGLALLTSLHAFVLA) form the signal peptide. N-linked (GlcNAc...) asparagine glycans are attached at residues N100 and N121. The Zn(2+) site is built by H171, D191, and E227. N242 is a glycosylation site (N-linked (GlcNAc...) asparagine). D254 provides a ligand contact to Zn(2+). The region spanning 411–497 (MPRNVRVNTN…ERGVAVLPFP (87 aa)) is the Fibronectin type-III domain. N-linked (GlcNAc...) asparagine glycosylation occurs at N424.

It belongs to the peptidase M28 family. M28B subfamily. The cofactor is Zn(2+).

It localises to the secreted. This Trichophyton verrucosum (strain HKI 0517) protein is Probable zinc metalloprotease TRV_03476.